Here is a 371-residue protein sequence, read N- to C-terminus: tRNA-specific 2-thiouridylase MnmA (371 aa).

ATP-binding positions include 24–31 (AMSGGVDS) and Leu-50. Residue Cys-119 is the Nucleophile of the active site. A disulfide bridge connects residues Cys-119 and Cys-215. Gly-143 contacts ATP. The interaction with tRNA stretch occupies residues 165-167 (KDQ). Catalysis depends on Cys-215, which acts as the Cysteine persulfide intermediate.

This sequence belongs to the MnmA/TRMU family.

It localises to the cytoplasm. It carries out the reaction S-sulfanyl-L-cysteinyl-[protein] + uridine(34) in tRNA + AH2 + ATP = 2-thiouridine(34) in tRNA + L-cysteinyl-[protein] + A + AMP + diphosphate + H(+). Its function is as follows. Catalyzes the 2-thiolation of uridine at the wobble position (U34) of tRNA, leading to the formation of s(2)U34. This chain is tRNA-specific 2-thiouridylase MnmA, found in Neorickettsia sennetsu (strain ATCC VR-367 / Miyayama) (Ehrlichia sennetsu).